We begin with the raw amino-acid sequence, 186 residues long: Oligoribonuclease (186 aa).

The Exonuclease domain maps to 12–175; the sequence is LIWIDLEMTG…DDIKDSIKEL (164 aa). The active site involves Y133.

This sequence belongs to the oligoribonuclease family.

It is found in the cytoplasm. Functionally, 3'-to-5' exoribonuclease specific for small oligoribonucleotides. This Wigglesworthia glossinidia brevipalpis protein is Oligoribonuclease.